Consider the following 423-residue polypeptide: 3-phosphoshikimate 1-carboxyvinyltransferase (423 aa).

3-phosphoshikimate contacts are provided by Lys21, Ser22, and Arg26. Residue Lys21 coordinates phosphoenolpyruvate. Residues Gly92 and Arg120 each coordinate phosphoenolpyruvate. 4 residues coordinate 3-phosphoshikimate: Ser164, Gln166, Asp312, and Lys339. Gln166 is a binding site for phosphoenolpyruvate. Residue Asp312 is the Proton acceptor of the active site. Positions 343 and 385 each coordinate phosphoenolpyruvate.

It belongs to the EPSP synthase family. Monomer.

The protein localises to the cytoplasm. It catalyses the reaction 3-phosphoshikimate + phosphoenolpyruvate = 5-O-(1-carboxyvinyl)-3-phosphoshikimate + phosphate. It participates in metabolic intermediate biosynthesis; chorismate biosynthesis; chorismate from D-erythrose 4-phosphate and phosphoenolpyruvate: step 6/7. Its function is as follows. Catalyzes the transfer of the enolpyruvyl moiety of phosphoenolpyruvate (PEP) to the 5-hydroxyl of shikimate-3-phosphate (S3P) to produce enolpyruvyl shikimate-3-phosphate and inorganic phosphate. This chain is 3-phosphoshikimate 1-carboxyvinyltransferase, found in Thermoanaerobacter pseudethanolicus (strain ATCC 33223 / 39E) (Clostridium thermohydrosulfuricum).